A 346-amino-acid chain; its full sequence is MTDQSQQFASDNYSGICPEAWAAMEKANHGHERAYGDDQWTARAADHFRKLFETDCEVFFAFNGTAANSLALSSLCQSYHSVICSETAHVETDECGAPEFFSNGSKLLTARSEGGKLTPASIREVALKRQDIHYPKPRVVTITQATEVGSVYRPDELKAISATCKELGLNLHMDGARFSNACAFLGCTPAELTWKAGIDVLCFGGTKNGMAVGEAILFFNRKLAEDFDYRCKQAGQLASKMRFLSAPWVGLLEDGAWLRHAAHANHCAQLLSSLVADIPGVELMFPVEANGVFLQMSEPALEALRNKGWRFYTFIGSGGARFMCSWDTEEARVRELAADIRAVMSA.

At K207 the chain carries N6-(pyridoxal phosphate)lysine.

This sequence belongs to the threonine aldolase family. As to quaternary structure, homotetramer. It depends on pyridoxal 5'-phosphate as a cofactor.

It catalyses the reaction L-threonine = acetaldehyde + glycine. The enzyme catalyses L-allo-threonine = acetaldehyde + glycine. In terms of biological role, catalyzes the cleavage of L-allo-threonine and L-threonine to glycine and acetaldehyde. Can also act on L-erythro-phenylserine, L-threo-phenylserine, L-beta-3,4-methylenedioxyphenylserine and L-beta-3,4-dihydroxyphenylserine. The sequence is that of Low specificity L-threonine aldolase (ltaE) from Pseudomonas sp. (strain NCIMB 10558).